Reading from the N-terminus, the 179-residue chain is Large ribosomal subunit protein uL6 (179 aa).

Belongs to the universal ribosomal protein uL6 family. In terms of assembly, part of the 50S ribosomal subunit.

In terms of biological role, this protein binds to the 23S rRNA, and is important in its secondary structure. It is located near the subunit interface in the base of the L7/L12 stalk, and near the tRNA binding site of the peptidyltransferase center. This chain is Large ribosomal subunit protein uL6, found in Desulfovibrio desulfuricans (strain ATCC 27774 / DSM 6949 / MB).